Here is a 382-residue protein sequence, read N- to C-terminus: Gap junction alpha-1 protein (382 aa).

Residues 2–23 (GGWSALAKLLGKVQAYSPAGGK) lie on the Cytoplasmic side of the membrane. S5 is subject to Phosphoserine. The helical transmembrane segment at 24–44 (VWLSVLFIFRILLLGTAVESA) threads the bilayer. Over 45–76 (WGDEQSAFRCNTQQPGCENVCYDKSFPISHVR) the chain is Extracellular. Cystine bridges form between C54–C192 and C187–C198. Residues 77 to 97 (FWVLQIIFVSVPTLLYLAHVF) form a helical membrane-spanning segment. Over 98–155 (YVMRKEEKLNKKEEELKVAQTDGANVDMHLKQIEIKKFKYGIEEHGKVKMRGGLLRTY) the chain is Cytoplasmic. Residue K144 forms a Glycyl lysine isopeptide (Lys-Gly) (interchain with G-Cter in SUMO) linkage. Residues 156–176 (IISILFKSVFEVAFLLIQWYI) traverse the membrane as a helical segment. Residues 177–207 (YGFSLSAVYTCKREPCPHQVDCFLSRPTEKT) lie on the Extracellular side of the membrane. Residues 208-228 (IFIIFMLVVSLVSLALNIIEL) traverse the membrane as a helical segment. Topologically, residues 229–382 (FYVFFKGVKD…SRPRPDDLEI (154 aa)) are cytoplasmic. A Glycyl lysine isopeptide (Lys-Gly) (interchain with G-Cter in SUMO) cross-link involves residue K237. Residues 244–382 (SDPYHATTGP…SRPRPDDLEI (139 aa)) form an interaction with NOV region. Position 247 is a phosphotyrosine (Y247). Residues S255, S257, and S262 each carry the phosphoserine modification. The interaction with UBQLN4 stretch occupies residues 264 to 382 (EYAYFNGCSS…SRPRPDDLEI (119 aa)). Residue C271 is modified to S-nitrosocysteine. T275 carries the post-translational modification Phosphothreonine. S306 and S314 each carry phosphoserine. A compositionally biased stretch (polar residues) spans 317–332 (QNRMGQAGSTISNSHA). Residues 317–382 (QNRMGQAGST…SRPRPDDLEI (66 aa)) are disordered. Phosphoserine; by CK1 is present on S325. T326 is subject to Phosphothreonine. 2 positions are modified to phosphoserine; by CK1: S328 and S330. 2 positions are modified to phosphoserine: S344 and S365. The segment covering 362 to 374 (RPSSRASSRASSR) has biased composition (low complexity). S368 is subject to Phosphoserine; by PKC/PRKCG and PKC/PRKCD. 2 positions are modified to phosphoserine: S369 and S373.

The protein belongs to the connexin family. Alpha-type (group II) subfamily. In terms of assembly, a connexon is composed of a hexamer of connexins. Interacts with SGSM3. Interacts with RIC1/CIP150. Interacts with CNST and CSNK1D. Interacts (via C-terminus) with TJP1. Interacts (via C-terminus) with SRC (via SH3 domain). Interacts (not ubiquitinated) with UBQLN4 (via UBA domain). Interacts with NOV. Interacts with TMEM65. Interacts with ANK3/ANKG and PKP2. Phosphorylation at Ser-325, Ser-328 and Ser-330 by CK1 modulates gap junction assembly. Phosphorylated at Ser-368 by PRKCG; phosphorylation induces disassembly of gap junction plaques and inhibition of gap junction activity. Phosphorylation at Ser-368 by PRKCD triggers its internalization into small vesicles leading to proteasome-mediated degradation. In terms of processing, sumoylated with SUMO1, SUMO2 and SUMO3, which may regulate the level of functional Cx43 gap junctions at the plasma membrane. May be desumoylated by SENP1 or SENP2. Post-translationally, S-nitrosylation at Cys-271 is enriched at the muscle endothelial gap junction in arteries, it augments channel permeability and may regulate of smooth muscle cell to endothelial cell communication. Acetylated in the developing cortex; leading to delocalization from the cell membrane.

It is found in the cell membrane. The protein resides in the cell junction. The protein localises to the gap junction. It localises to the endoplasmic reticulum. In terms of biological role, gap junction protein that acts as a regulator of bladder capacity. A gap junction consists of a cluster of closely packed pairs of transmembrane channels, the connexons, through which materials of low MW diffuse from one cell to a neighboring cell. May play a critical role in the physiology of hearing by participating in the recycling of potassium to the cochlear endolymph. Negative regulator of bladder functional capacity: acts by enhancing intercellular electrical and chemical transmission, thus sensitizing bladder muscles to cholinergic neural stimuli and causing them to contract. May play a role in cell growth inhibition through the regulation of NOV expression and localization. Plays an essential role in gap junction communication in the ventricles. In Canis lupus familiaris (Dog), this protein is Gap junction alpha-1 protein (GJA1).